Reading from the N-terminus, the 274-residue chain is Dermonecrotic toxin SdSicTox-betaIIB1ai (274 aa).

H5 is a catalytic residue. Mg(2+) contacts are provided by E25 and D27. H41 serves as the catalytic Nucleophile. Cystine bridges form between C45–C51 and C47–C190. Residue D85 participates in Mg(2+) binding.

The protein belongs to the arthropod phospholipase D family. Class II subfamily. Mg(2+) is required as a cofactor. Expressed by the venom gland.

The protein resides in the secreted. It carries out the reaction an N-(acyl)-sphingosylphosphocholine = an N-(acyl)-sphingosyl-1,3-cyclic phosphate + choline. The catalysed reaction is an N-(acyl)-sphingosylphosphoethanolamine = an N-(acyl)-sphingosyl-1,3-cyclic phosphate + ethanolamine. The enzyme catalyses a 1-acyl-sn-glycero-3-phosphocholine = a 1-acyl-sn-glycero-2,3-cyclic phosphate + choline. It catalyses the reaction a 1-acyl-sn-glycero-3-phosphoethanolamine = a 1-acyl-sn-glycero-2,3-cyclic phosphate + ethanolamine. Its function is as follows. Dermonecrotic toxins cleave the phosphodiester linkage between the phosphate and headgroup of certain phospholipids (sphingolipid and lysolipid substrates), forming an alcohol (often choline) and a cyclic phosphate. This toxin acts on sphingomyelin (SM). It may also act on ceramide phosphoethanolamine (CPE), lysophosphatidylcholine (LPC) and lysophosphatidylethanolamine (LPE), but not on lysophosphatidylserine (LPS), and lysophosphatidylglycerol (LPG). It acts by transphosphatidylation, releasing exclusively cyclic phosphate products as second products. Induces dermonecrosis, hemolysis, increased vascular permeability, edema, inflammatory response, and platelet aggregation. This chain is Dermonecrotic toxin SdSicTox-betaIIB1ai, found in Sicarius cf. damarensis (strain GJB-2008) (Six-eyed sand spider).